The primary structure comprises 145 residues: Small ribosomal subunit protein bS6 (145 aa).

It belongs to the bacterial ribosomal protein bS6 family.

Functionally, binds together with bS18 to 16S ribosomal RNA. This Mycoplasmopsis agalactiae (strain NCTC 10123 / CIP 59.7 / PG2) (Mycoplasma agalactiae) protein is Small ribosomal subunit protein bS6.